A 275-amino-acid chain; its full sequence is Urease accessory protein UreD (275 aa).

The protein belongs to the UreD family. UreD, UreF and UreG form a complex that acts as a GTP-hydrolysis-dependent molecular chaperone, activating the urease apoprotein by helping to assemble the nickel containing metallocenter of UreC. The UreE protein probably delivers the nickel.

Its subcellular location is the cytoplasm. Its function is as follows. Required for maturation of urease via the functional incorporation of the urease nickel metallocenter. This Cereibacter sphaeroides (strain ATCC 17023 / DSM 158 / JCM 6121 / CCUG 31486 / LMG 2827 / NBRC 12203 / NCIMB 8253 / ATH 2.4.1.) (Rhodobacter sphaeroides) protein is Urease accessory protein UreD.